A 346-amino-acid polypeptide reads, in one-letter code: 3 beta-hydroxysteroid dehydrogenase/Delta 5--&gt;4-isomerase (346 aa).

Residue tyrosine 147 is the Proton acceptor of the active site. Lysine 151 contributes to the NAD(+) binding site.

The protein belongs to the 3-beta-HSD family.

It catalyses the reaction a 3beta-hydroxy-Delta(5)-steroid + NAD(+) = a 3-oxo-Delta(5)-steroid + NADH + H(+). The enzyme catalyses a 3-oxo-Delta(5)-steroid = a 3-oxo-Delta(4)-steroid. The protein operates within lipid metabolism; steroid biosynthesis. Functionally, catalyzes the oxidative conversion of Delta(5)-ene-3-beta-hydroxy steroid, and the oxidative conversion of ketosteroids. The 3-beta-HSD enzymatic system plays a crucial role in the biosynthesis of all classes of hormonal steroids. During viral infection, steroid production contributes to virulence by inhibiting the host inflammatory response. This is 3 beta-hydroxysteroid dehydrogenase/Delta 5--&gt;4-isomerase (OPG174) from Vaccinia virus (strain Western Reserve) (VACV).